A 607-amino-acid polypeptide reads, in one-letter code: Chaperone protein DnaK (607 aa).

At Thr-174 the chain carries Phosphothreonine; by autocatalysis. The segment at 577 to 607 (GYTASGPQGGPNPGGGQSGPDGNVNTDYKVY) is disordered. Positions 583–595 (PQGGPNPGGGQSG) are enriched in gly residues.

The protein belongs to the heat shock protein 70 family.

Functionally, acts as a chaperone. This chain is Chaperone protein DnaK, found in Caldicellulosiruptor bescii (strain ATCC BAA-1888 / DSM 6725 / KCTC 15123 / Z-1320) (Anaerocellum thermophilum).